The chain runs to 75 residues: Large ribosomal subunit protein uL24c (75 aa).

The protein belongs to the universal ribosomal protein uL24 family. As to quaternary structure, part of the 50S ribosomal subunit.

The protein localises to the plastid. It is found in the chloroplast. Functionally, one of two assembly initiator proteins, it binds directly to the 5'-end of the 23S rRNA, where it nucleates assembly of the 50S subunit. This chain is Large ribosomal subunit protein uL24c (rpl24), found in Cyanidioschyzon merolae (strain NIES-3377 / 10D) (Unicellular red alga).